Here is a 442-residue protein sequence, read N- to C-terminus: D-serine dehydratase (442 aa).

The residue at position 118 (lysine 118) is an N6-(pyridoxal phosphate)lysine.

This sequence belongs to the serine/threonine dehydratase family. DsdA subfamily. Monomer. Pyridoxal 5'-phosphate is required as a cofactor.

It carries out the reaction D-serine = pyruvate + NH4(+). This chain is D-serine dehydratase, found in Citrobacter koseri (strain ATCC BAA-895 / CDC 4225-83 / SGSC4696).